Consider the following 415-residue polypeptide: Acetyl-CoA acetyltransferase 1 (415 aa).

The active-site Acyl-thioester intermediate is the cysteine 99. Position 239 (lysine 239) interacts with CoA. Position 256 (alanine 256) interacts with K(+). Serine 260 serves as a coordination point for CoA. Valine 357 is a K(+) binding site. Residues histidine 361 and cysteine 391 each act as proton acceptor in the active site.

Belongs to the thiolase-like superfamily. Thiolase family. In terms of tissue distribution, expressed in the vascular system of roots, cotyledons, young leaves, fully expanded leaves, stems, flowers, and funiculi of siliques.

Its subcellular location is the cytoplasm. The protein resides in the peroxisome. The catalysed reaction is 2 acetyl-CoA = acetoacetyl-CoA + CoA. It participates in metabolic intermediate biosynthesis; (R)-mevalonate biosynthesis; (R)-mevalonate from acetyl-CoA: step 1/3. Catalyzes the condensation of two molecules of acetyl-CoA to produce acetoacetyl-CoA. The protein is Acetyl-CoA acetyltransferase 1 of Arabidopsis thaliana (Mouse-ear cress).